The primary structure comprises 527 residues: Abrin-b (527 aa).

Gln1 carries the post-translational modification Pyrrolidone carboxylic acid. A glycan (N-linked (GlcNAc...) asparagine) is linked at Asn110. Glu163 is an active-site residue. Intrachain disulfides connect Cys246–Cys268, Cys285–Cys304, and Cys328–Cys345. Residues 272–399 (YEPTVRIGGR…YLMRQGWRTG (128 aa)) enclose the Ricin B-type lectin 1 domain. A 1-alpha repeat occupies 282-324 (NGMCVDVYDDGYHNGNRIIAWKCKDRLEENQLWTLKSDKTIRS). Residues 325 to 365 (NGKCLTTEGYAPGNYVMIYDCTSAVAEATYWEIWDNGTIIN) form a 1-beta repeat. Asn360 and Asn400 each carry an N-linked (GlcNAc...) asparagine glycan. The stretch at 368–400 (SALVLSAESSSMGGTLTVQTNEYLMRQGWRTGN) is one 1-gamma repeat. One can recognise a Ricin B-type lectin 2 domain in the interval 402–526 (TSPFVTSISG…GKPNQIWLTL (125 aa)). Residues 413–448 (SDLCMQAQGSNVWLAYCDNNKKEQQWALYTDGSIRS) form a 2-alpha repeat. Intrachain disulfides connect Cys416/Cys429 and Cys455/Cys472. A 2-beta repeat occupies 452–491 (TNNCLTSKDHKQGSPIVLMACSNGWASQRWLFRNDGSIYN). One copy of the 2-gamma repeat lies at 494 to 527 (DDMVMDVKRSDPSLKEIILHPYHGKPNQIWLTLF).

This sequence in the N-terminal section; belongs to the ribosome-inactivating protein family. Type 2 RIP subfamily. Disulfide-linked dimer of A and B chains.

The enzyme catalyses Endohydrolysis of the N-glycosidic bond at one specific adenosine on the 28S rRNA.. Its function is as follows. The A chain is responsible for inhibiting protein synthesis through the catalytic inactivation of 60S ribosomal subunits by removing adenine from position 4,324 of 28S rRNA. Abrin-a is more toxic than ricin. Functionally, the B chain is a galactose-specific lectin that facilitates the binding of abrin to the cell membrane that precedes endocytosis. This Abrus precatorius (Indian licorice) protein is Abrin-b.